Reading from the N-terminus, the 838-residue chain is G-protein coupled receptor-associated sorting protein 2 (838 aa).

Disordered stretches follow at residues 1–121 (MTGA…PGAR), 218–293 (ASNE…NPFS), and 531–552 (LELS…PSPE). Positions 13–31 (KPEKKAGEEVVAGPEREND) are enriched in basic and acidic residues. Over residues 220-235 (NESGFWSADETSTASS) the composition is skewed to polar residues. Basic residues predominate over residues 255–271 (RSRHRAKHQTNPRSRPR). Phosphoserine occurs at positions 282 and 284. Over residues 542 to 552 (SLLQPDQPSPE) the composition is skewed to polar residues.

The protein belongs to the GPRASP family. In terms of assembly, interacts with cytoplasmic tails of a variety of G protein-coupled receptors such as muscarinic acetylcholine receptor M1/CHRM1 and calcitonin receptor/CALCR.

Functionally, may play a role in regulation of a variety of G-protein coupled receptors. This is G-protein coupled receptor-associated sorting protein 2 (GPRASP2) from Pongo abelii (Sumatran orangutan).